A 543-amino-acid polypeptide reads, in one-letter code: Exodeoxyribonuclease 7 large subunit (543 aa).

Positions 498–543 (VTGEGDKASPPPQAASATTTPAPGRPNPLPKSPKKSEPPAGQGSLF) are disordered.

It belongs to the XseA family. In terms of assembly, heterooligomer composed of large and small subunits.

It is found in the cytoplasm. It catalyses the reaction Exonucleolytic cleavage in either 5'- to 3'- or 3'- to 5'-direction to yield nucleoside 5'-phosphates.. Its function is as follows. Bidirectionally degrades single-stranded DNA into large acid-insoluble oligonucleotides, which are then degraded further into small acid-soluble oligonucleotides. The sequence is that of Exodeoxyribonuclease 7 large subunit from Allorhizobium ampelinum (strain ATCC BAA-846 / DSM 112012 / S4) (Agrobacterium vitis (strain S4)).